The following is a 72-amino-acid chain: Sec-independent protein translocase protein TatA (72 aa).

The helical transmembrane segment at 1–21 (MGSFSIWHWLIVLAVVLLLFG) threads the bilayer. The interval 43-72 (MADEDAKEDPRTIDAKAEEPVKDVKKTTKS) is disordered. Positions 50–72 (EDPRTIDAKAEEPVKDVKKTTKS) are enriched in basic and acidic residues.

This sequence belongs to the TatA/E family. The Tat system comprises two distinct complexes: a TatABC complex, containing multiple copies of TatA, TatB and TatC subunits, and a separate TatA complex, containing only TatA subunits. Substrates initially bind to the TatABC complex, which probably triggers association of the separate TatA complex to form the active translocon.

The protein resides in the cell inner membrane. Part of the twin-arginine translocation (Tat) system that transports large folded proteins containing a characteristic twin-arginine motif in their signal peptide across membranes. TatA could form the protein-conducting channel of the Tat system. This is Sec-independent protein translocase protein TatA from Brucella suis biovar 1 (strain 1330).